The chain runs to 194 residues: Ribonuclease HII (194 aa).

The region spanning I3–L193 is the RNase H type-2 domain. A divalent metal cation contacts are provided by D9, E10, and D101.

This sequence belongs to the RNase HII family. It depends on Mn(2+) as a cofactor. Mg(2+) is required as a cofactor.

The protein localises to the cytoplasm. The enzyme catalyses Endonucleolytic cleavage to 5'-phosphomonoester.. In terms of biological role, endonuclease that specifically degrades the RNA of RNA-DNA hybrids. This is Ribonuclease HII from Neisseria meningitidis serogroup C (strain 053442).